Here is a 288-residue protein sequence, read N- to C-terminus: Probable branched-chain-amino-acid aminotransferase (288 aa).

The residue at position 153 (Lys-153) is an N6-(pyridoxal phosphate)lysine.

It belongs to the class-IV pyridoxal-phosphate-dependent aminotransferase family. Pyridoxal 5'-phosphate is required as a cofactor.

It catalyses the reaction L-leucine + 2-oxoglutarate = 4-methyl-2-oxopentanoate + L-glutamate. It carries out the reaction L-isoleucine + 2-oxoglutarate = (S)-3-methyl-2-oxopentanoate + L-glutamate. The enzyme catalyses L-valine + 2-oxoglutarate = 3-methyl-2-oxobutanoate + L-glutamate. It functions in the pathway amino-acid biosynthesis; L-isoleucine biosynthesis; L-isoleucine from 2-oxobutanoate: step 4/4. It participates in amino-acid biosynthesis; L-leucine biosynthesis; L-leucine from 3-methyl-2-oxobutanoate: step 4/4. The protein operates within amino-acid biosynthesis; L-valine biosynthesis; L-valine from pyruvate: step 4/4. Acts on leucine, isoleucine and valine. The protein is Probable branched-chain-amino-acid aminotransferase (ilvE) of Rickettsia typhi (strain ATCC VR-144 / Wilmington).